Consider the following 1042-residue polypeptide: Aldehyde reductase lnaA (1042 aa).

Residues 29–425 (HAFLNPSAMA…GRRDHQVKVR (397 aa)) form an adenylation (A) domain region. The Carrier domain maps to 532–609 (DNEDSTRGKL…RLAGILEERI (78 aa)). O-(pantetheine 4'-phosphoryl)serine is present on S569. A short-chain dehydrogenase/reductase (R) domain region spans residues 655-897 (LTGATGFVGS…FVPVDYVNAV (243 aa)).

It belongs to the NRP synthetase family.

The catalysed reaction is L-tyrosinal + AMP + diphosphate + NADP(+) = L-tyrosine + ATP + NADPH + H(+). The protein operates within secondary metabolite biosynthesis. Functionally, non-canonical nonribosomal peptide synthetase; part of the lna gene cluster that mediates the biosynthesis of diastereomeric piperazines. Lna and lnb clusters encode sets of enzymes that produce overlapping sets of previously undescribed metabolites such as piperazinomycin-like metabolites or morpholine. The lna and lnb biosynthetic pathways appear to be part of a signaling network that controls the formation of sclerotia, a resilient overwintering structure. One primary function of the non-canonical nonribosomal peptide synthetases lnaA and lnbA consists in the reduction of L-tyrosine. The presence in the clusters of tailoring enzymes such as the oxidoreductases lnaB, lnbB, lnaE or lnbE, as well as of the cytochrome P450 monooxygenases lnaC, lnaD, or lnbC, might explain formation of various diastereomeric piperazines. This Aspergillus flavus (strain ATCC 200026 / FGSC A1120 / IAM 13836 / NRRL 3357 / JCM 12722 / SRRC 167) protein is Aldehyde reductase lnaA.